The following is a 553-amino-acid chain: Glutamine--tRNA ligase (553 aa).

The 'HIGH' region motif lies at 34-44 (PEPNGYLHIGH). Residues 35–37 (EPN) and 41–47 (HIGHAKS) contribute to the ATP site. Aspartate 68 and tyrosine 213 together coordinate L-glutamine. ATP contacts are provided by residues threonine 232 and 262 to 263 (RL). The 'KMSKS' region motif lies at 269–273 (LTSKR).

Belongs to the class-I aminoacyl-tRNA synthetase family. As to quaternary structure, monomer.

The protein resides in the cytoplasm. The catalysed reaction is tRNA(Gln) + L-glutamine + ATP = L-glutaminyl-tRNA(Gln) + AMP + diphosphate. This is Glutamine--tRNA ligase from Psychromonas ingrahamii (strain DSM 17664 / CCUG 51855 / 37).